Consider the following 588-residue polypeptide: Vesicular glutamate transporter 3 (588 aa).

Over 1 to 76 the chain is Cytoplasmic; that stretch reads MPFNAFDTFK…CSCCGIPKRY (76 aa). The helical transmembrane segment at 77-97 threads the bilayer; it reads IIAVMSGLGFCISFGIRCNLG. Residues 98-130 lie on the Vesicular side of the membrane; the sequence is VAIVEMVNNSTVYVDGKPEIQTAQFNWDPETVG. Asn106 carries an N-linked (GlcNAc...) asparagine glycan. Residues 131-151 traverse the membrane as a helical segment; that stretch reads LIHGSFFWGYIVTQIPGGFIS. Residues 152-153 are Cytoplasmic-facing; sequence NK. A helical transmembrane segment spans residues 154–174; it reads FAANRVFGAAIFLTSTLNMFI. Over 175–182 the chain is Vesicular; that stretch reads PSAARVHY. The chain crosses the membrane as a helical span at residues 183–203; the sequence is GCVMCVRILQGLVEGVTYPAC. At 204–221 the chain is on the cytoplasmic side; that stretch reads HGMWSKWAPPLERSRLAT. A helical membrane pass occupies residues 222–242; that stretch reads TSFCGSYAGAVVAMPLAGVLV. Topologically, residues 243-249 are vesicular; that stretch reads QYIGWAS. The helical transmembrane segment at 250–270 threads the bilayer; sequence VFYIYGMFGIIWYMFWLLQAY. Over 271 to 314 the chain is Cytoplasmic; that stretch reads ECPAVHPTISNEERTYIETSIGEGANLASLSKFNTPWRRFFTSL. Residues 315–335 form a helical membrane-spanning segment; it reads PVYAIIVANFCRSWTFYLLLI. The Vesicular portion of the chain corresponds to 336 to 353; sequence SQPAYFEEVFGFAISKVG. Residues 354-374 form a helical membrane-spanning segment; sequence LLSAVPHMVMTIVVPIGGQLA. Topologically, residues 375 to 390 are cytoplasmic; it reads DYLRSRKILTTTAVRK. The helical transmembrane segment at 391 to 411 threads the bilayer; that stretch reads IMNCGGFGMEATLLLVVGFSH. Residues 412–413 are Vesicular-facing; sequence TK. The chain crosses the membrane as a helical span at residues 414-434; sequence GVAISFLVLAVGFSGFAISGF. The Cytoplasmic portion of the chain corresponds to 435–447; that stretch reads NVNHLDIAPRYAS. The chain crosses the membrane as a helical span at residues 448–468; sequence ILMGISNGVGTLSGMVCPLIV. Residues 469–481 are Vesicular-facing; it reads GAMTKHKTREEWQ. Residues 482-502 form a helical membrane-spanning segment; the sequence is NVFLIAALVHYSGVIFYGVFA. At 503-585 the chain is on the cytoplasmic side; that stretch reads SGEKQDWADP…LSYQNEEDFS (83 aa). A disordered region spans residues 539–588; that stretch reads FVSPRKKMSYGATTQNCEVQKTDRRQQRESAFEGEEPLSYQNEEDFSETS. Positions 558-569 are enriched in basic and acidic residues; that stretch reads QKTDRRQQRESA. The segment covering 570-588 has biased composition (acidic residues); it reads FEGEEPLSYQNEEDFSETS.

Belongs to the major facilitator superfamily. Sodium/anion cotransporter family. VGLUT subfamily. As to expression, expressed in brain, kidney and liver. Expressed within the amygdala, brainstem, cerberal cortex, dorsal root ganglia, dorsal spinal cord, hippocampus, hypothalamus, retina, striatum and ventral spinal cord. Expressed within neurons of the caudate-putamen, olfactory tubercle, nucleus accumbens, hippocampus, interpeduncular nucleus and dorsal and medial raphe nuclei. Expressed in inner hair cells of the ear. Expressed at synaptic terminals within the lateral superior olive (LSO), a nucleus of the mammalian sound localization system, and in the medial nucleus of the trapezoid body (MNTB), which provides inhibitory input to the LSO.

It localises to the cytoplasmic vesicle. The protein localises to the secretory vesicle. It is found in the synaptic vesicle membrane. Its subcellular location is the cell membrane. The protein resides in the synapse. It localises to the synaptosome. It carries out the reaction L-glutamate(out) = L-glutamate(in). The enzyme catalyses chloride(in) = chloride(out). It catalyses the reaction 3 Na(+)(out) + phosphate(out) = 3 Na(+)(in) + phosphate(in). The L-glutamate uniporter activity exhibits a biphasic dependence on chloride concentration. Chloride channel activity is allosterically activated by lumenal H(+) and Cl(-) leading to synaptic vesicles acidification. The glutamate transport activity is allosterically activated by lumenal H(+) and Cl(-), preventing non-vesicular L-glutamate release. Multifunctional transporter that transports L-glutamate as well as multiple ions such as chloride, sodium and phosphate. At the synaptic vesicle membrane, mainly functions as an uniporter that mediates the uptake of L-glutamate into synaptic vesicles at presynaptic nerve terminals of excitatory neural cells. The L-glutamate uniporter activity is electrogenic and is driven by the proton electrochemical gradient, mainly by the electrical gradient established by the vacuolar H(+)-ATPase across the synaptic vesicle membrane. In addition, functions as a chloride channel that allows a chloride permeation through the synaptic vesicle membrane that affects the proton electrochemical gradient and promotes synaptic vesicles acidification. At the plasma membrane, following exocytosis, functions as a symporter of Na(+) and phosphate from the extracellular space to the cytoplasm allowing synaptic phosphate homeostasis regulation. The symporter activity is electrogenic. Moreover, operates synergistically with SLC18A3/VACHT under a constant H(+) gradient, thereby allowing striatal vesicular acetylcholine uptake. This Rattus norvegicus (Rat) protein is Vesicular glutamate transporter 3.